A 643-amino-acid chain; its full sequence is Threonine--tRNA ligase (643 aa).

Residues 1-61 (MVAISLPDGS…TTDASVSLIT (61 aa)) enclose the TGS domain. Residues 243 to 534 (DHRRVGQEMD…LIENCAGRFP (292 aa)) are catalytic. Zn(2+) is bound by residues cysteine 334, histidine 385, and histidine 511.

The protein belongs to the class-II aminoacyl-tRNA synthetase family. As to quaternary structure, homodimer. Zn(2+) serves as cofactor.

The protein resides in the cytoplasm. The enzyme catalyses tRNA(Thr) + L-threonine + ATP = L-threonyl-tRNA(Thr) + AMP + diphosphate + H(+). Functionally, catalyzes the attachment of threonine to tRNA(Thr) in a two-step reaction: L-threonine is first activated by ATP to form Thr-AMP and then transferred to the acceptor end of tRNA(Thr). Also edits incorrectly charged L-seryl-tRNA(Thr). This is Threonine--tRNA ligase from Rhodospirillum rubrum (strain ATCC 11170 / ATH 1.1.1 / DSM 467 / LMG 4362 / NCIMB 8255 / S1).